The following is a 706-amino-acid chain: Envelope glycoprotein H (706 aa).

Positions Met1–Ala18 are cleaved as a signal peptide. Over Ser19–Leu682 the chain is Virion surface. N-linked (GlcNAc...) asparagine; by host glycosylation occurs at Asn60. The interval Asp165 to Val229 is interaction with gL. Residues Cys278 and Cys335 are joined by a disulfide bond. Residue Asn435 is glycosylated (N-linked (GlcNAc...) asparagine; by host). 2 cysteine pairs are disulfide-bonded: Cys454–Cys478 and Cys534–Cys587. 2 N-linked (GlcNAc...) asparagine; by host glycosylation sites follow: Asn549 and Asn604. A disulfide bridge links Cys612 with Cys615. The N-linked (GlcNAc...) asparagine; by host glycan is linked to Asn664. The chain crosses the membrane as a helical span at residues Ala683–Met703. Topologically, residues Phe704–Leu706 are intravirion.

Belongs to the herpesviridae glycoprotein H family. As to quaternary structure, interacts with glycoprotein L (gL); this interaction is necessary for the correct processing and cell surface expression of gH. The heterodimer gH/gL seems to interact with gB trimers during fusion. The heterodimer gH/gL interacts with host EPHA2 to facilitate virus internalization and fusion. Interacts with glycoprotein 42/BZLF2. Post-translationally, N-glycosylated, O-glycosylated, and sialylated.

It is found in the virion membrane. Its subcellular location is the host cell membrane. It localises to the host endosome membrane. Functionally, the heterodimer glycoprotein H-glycoprotein L is required for the fusion of viral and plasma membranes leading to virus entry into the host cell. Following initial binding to host receptor, membrane fusion is mediated by the fusion machinery composed of gB and the heterodimer gH/gL. May also be involved in the fusion between the virion envelope and the outer nuclear membrane during virion morphogenesis. The heterodimer gH/gL targets also host EPHA2 to promote viral entry. The polypeptide is Envelope glycoprotein H (Homo sapiens (Human)).